The following is a 128-amino-acid chain: Probable 4-amino-4-deoxy-L-arabinose-phosphoundecaprenol flippase subunit ArnF (128 aa).

Over 1-2 (MG) the chain is Cytoplasmic. Residues 3–23 (LMWGLFSVIIASAAQLSLGFA) traverse the membrane as a helical segment. Over 24–35 (ASHLPPMTHLWD) the chain is Periplasmic. The chain crosses the membrane as a helical span at residues 36 to 56 (FIAALLAFGLDARILLLGLLG). Residues 57–76 (YLLSVFCWYKTLHKLALSKA) lie on the Cytoplasmic side of the membrane. A helical membrane pass occupies residues 77–97 (YALLSMSYVLVWIASMVLPGW). Topologically, residues 98–100 (EGT) are periplasmic. The chain crosses the membrane as a helical span at residues 101–121 (FSLKALLGVACIMSGLMLIFL). The Cytoplasmic portion of the chain corresponds to 122–128 (PTTKQRY).

Belongs to the ArnF family. Heterodimer of ArnE and ArnF.

It localises to the cell inner membrane. It participates in bacterial outer membrane biogenesis; lipopolysaccharide biosynthesis. Functionally, translocates 4-amino-4-deoxy-L-arabinose-phosphoundecaprenol (alpha-L-Ara4N-phosphoundecaprenol) from the cytoplasmic to the periplasmic side of the inner membrane. This chain is Probable 4-amino-4-deoxy-L-arabinose-phosphoundecaprenol flippase subunit ArnF, found in Escherichia coli O127:H6 (strain E2348/69 / EPEC).